Reading from the N-terminus, the 245-residue chain is Small ribosomal subunit protein uS2 (245 aa).

Belongs to the universal ribosomal protein uS2 family.

The sequence is that of Small ribosomal subunit protein uS2 from Pseudomonas entomophila (strain L48).